Consider the following 425-residue polypeptide: Trigger factor (425 aa).

In terms of domain architecture, PPIase FKBP-type spans 163 to 248; sequence GDTAVIDFEG…VHEIKTKELP (86 aa).

This sequence belongs to the FKBP-type PPIase family. Tig subfamily.

The protein localises to the cytoplasm. It carries out the reaction [protein]-peptidylproline (omega=180) = [protein]-peptidylproline (omega=0). In terms of biological role, involved in protein export. Acts as a chaperone by maintaining the newly synthesized protein in an open conformation. Functions as a peptidyl-prolyl cis-trans isomerase. The protein is Trigger factor of Bacillus cereus (strain ATCC 10987 / NRS 248).